Here is a 340-residue protein sequence, read N- to C-terminus: L-lysine 2,3-aminomutase (340 aa).

The Radical SAM core domain occupies Arg106–Lys321. Residues Cys120, Cys124, and Cys127 each coordinate [4Fe-4S] cluster. Lys332 carries the post-translational modification N6-(pyridoxal phosphate)lysine.

This sequence belongs to the radical SAM superfamily. KamA family. Requires [4Fe-4S] cluster as cofactor. The cofactor is pyridoxal 5'-phosphate.

The enzyme catalyses L-lysine = D-beta-lysine. With EpmA is involved in the beta-lysylation step of the post-translational modification of translation elongation factor P (EF-P) on 'Lys-34'. EpmB appears to act before EpmA. Displays lysine 2,3-aminomutase activity, producing (R)-beta-lysine from (S)-alpha-lysine (L-lysine). The chain is L-lysine 2,3-aminomutase (epmB) from Buchnera aphidicola subsp. Baizongia pistaciae (strain Bp).